Here is a 458-residue protein sequence, read N- to C-terminus: Glycine--tRNA ligase (458 aa).

2 residues coordinate substrate: R97 and E171. ATP contacts are provided by residues 203–205, 213–218, 287–288, and 331–334; these read RNE, FRTREF, EL, and GADR. A substrate-binding site is contributed by 218 to 222; it reads FEQME. Residue 327-331 coordinates substrate; the sequence is EPSLG.

Belongs to the class-II aminoacyl-tRNA synthetase family. In terms of assembly, homodimer.

It localises to the cytoplasm. It carries out the reaction tRNA(Gly) + glycine + ATP = glycyl-tRNA(Gly) + AMP + diphosphate. Functionally, catalyzes the attachment of glycine to tRNA(Gly). The protein is Glycine--tRNA ligase of Bacillus thuringiensis subsp. konkukian (strain 97-27).